The primary structure comprises 1849 residues: Protein virilizer (1849 aa).

5 stretches are compositionally biased toward basic and acidic residues: residues 206–219 (QHYH…QREM), 242–265 (THSE…DWSR), 281–291 (RSRSDADEHKW), 332–347 (HSSE…EERS), and 785–818 (VEAK…AAEE). Disordered stretches follow at residues 206–364 (QHYH…DEII), 783–818 (RVVE…AAEE), 1557–1584 (SASM…SSSG), 1666–1686 (GESK…EMTP), 1715–1782 (RGRG…NRGS), and 1798–1849 (IGSP…PYLR). Polar residues predominate over residues 1671–1684 (TLNLSGSPQSNREM). Residues 1732-1742 (SRPPNTSRPPS) show a composition bias toward low complexity. The segment covering 1800-1818 (SPSSWTESGGGSYRSTSES) has biased composition (polar residues).

It belongs to the vir family. As to quaternary structure, component of the WMM complex, a N6-methyltransferase complex composed of a catalytic subcomplex, named MAC, and of an associated subcomplex, named MACOM. The MAC subcomplex is composed of Ime4/Mettl3 and Mettl14. The MACOM subcomplex is composed of fl(2)d, Flacc/Xio, Hakai, vir, and, in some cases of nito. Part of a complex containing fl(2)d, Sxl and vir.

It is found in the nucleus. In terms of biological role, associated component of the WMM complex, a complex that mediates N6-methyladenosine (m6A) methylation of mRNAs, a modification that plays a role in the efficiency of mRNA splicing and is required for sex determination. Required for sex determination and dosage compensation via Sxl alternative splicing: m6A methylation acts as a key regulator of Sxl pre-mRNA and promotes female-specific alternative splicing of Sxl, which determines female physiognomy. M6A methylation is also required for neuronal functions. Required for proper inclusion of regulated exons in Ubx transcripts, leading to isoforms Ia/b and IIa/b. This Drosophila pseudoobscura pseudoobscura (Fruit fly) protein is Protein virilizer (vir).